Consider the following 148-residue polypeptide: Protein ADM2 (148 aa).

The signal sequence occupies residues 1–24 (MARIPTAALGCISLLCLQLPGSLS). Residues 25–98 (RSLGGDPRPV…HSGPRRHSGP (74 aa)) constitute a propeptide that is removed on maturation. Disordered stretches follow at residues 26-57 (SLGG…APRP) and 70-101 (RGAG…PRRT). Residues Cys110 and Cys115 are joined by a disulfide bond. The residue at position 147 (Tyr147) is a Tyrosine amide.

This sequence belongs to the adrenomedullin family. As to expression, expressed in the esophagus, stomach, jejunum, ileum, ileocecum, ascending colon, transverse colon, descending colon and rectum. Expressed in myocardial cells of the heart, renal tubular cells, hypothalamus, and pituitary.

It is found in the secreted. Functionally, intermedin/ADM2 is a peptide hormone that plays a role as physiological regulator of gastrointestinal and cardiovascular bioactivities mediated by the CALCRL-RAMPs receptor complexes. Activates the cAMP-dependent pathway through interaction with CALCRL-RAMP3 receptor complex. This Homo sapiens (Human) protein is Protein ADM2.